The sequence spans 811 residues: Auxin response factor 8 (811 aa).

A DNA-binding region (TF-B3) is located at residues 126–228 (FCKTLTASDT…QLFLGIRHAT (103 aa)). Disordered stretches follow at residues 467-496 (HQYLQQSASHNSDLMLQQQQQQQASRHLMH) and 544-565 (HLQQWQQQSEMPSPSFMKSDFT). Polar residues-rich tracts occupy residues 469 to 482 (YLQQSASHNSDLML) and 544 to 555 (HLQQWQQQSEMP). In terms of domain architecture, PB1 spans 705-789 (KNFVKVYKSG…WYIKILSPED (85 aa)).

This sequence belongs to the ARF family. As to quaternary structure, homodimers and heterodimers. As to expression, expressed in the whole plant.

Its subcellular location is the nucleus. Auxin response factors (ARFs) are transcriptional factors that bind specifically to the DNA sequence 5'-TGTCTC-3' found in the auxin-responsive promoter elements (AuxREs). Seems to act as transcriptional activator. Formation of heterodimers with Aux/IAA proteins may alter their ability to modulate early auxin response genes expression. Regulates both stamen and gynoecium maturation. Promotes jasmonic acid production. Partially redundant with ARF6. Involved in fruit initiation. Acts as an inhibitor to stop further carpel development in the absence of fertilization and the generation of signals required to initiate fruit and seed development. This chain is Auxin response factor 8 (ARF8), found in Arabidopsis thaliana (Mouse-ear cress).